A 363-amino-acid polypeptide reads, in one-letter code: uncharacterized protein (363 aa).

The next 4 membrane-spanning stretches (helical) occupy residues 34-54 (YVYD…IILW), 60-80 (LALF…TLLV), 91-111 (EIAD…TAAG), and 112-132 (LMFS…PLFL). The segment covering 232–245 (SSTTTHSTDSEQIL) has biased composition (polar residues). Residues 232 to 363 (SSTTTHSTDS…SSQKKKPSRK (132 aa)) form a disordered region. Composition is skewed to low complexity over residues 246–268 (TSVS…TPPN) and 275–285 (DSNSSDSSSSS). A compositionally biased stretch (basic and acidic residues) spans 322 to 342 (SRSERNAQHHRNKDQEQRQDS).

The protein belongs to the chlamydial CPn_0443/CT_005/TC_0273 family.

It localises to the cell membrane. This is an uncharacterized protein from Chlamydia trachomatis serovar D (strain ATCC VR-885 / DSM 19411 / UW-3/Cx).